We begin with the raw amino-acid sequence, 240 residues long: Protein FAM246C (240 aa).

2 disordered regions span residues 1 to 117 (MAEP…WRSA) and 161 to 240 (LPAA…TRAA). Composition is skewed to basic and acidic residues over residues 19–31 (EVLR…RRDP) and 60–74 (AASR…KLVE). The span at 165–175 (SPAPSPAPRPA) shows a compositional bias: pro residues. The span at 176-187 (ARPCRGRSAPLA) shows a compositional bias: low complexity.

It belongs to the FAM246 family.

This Homo sapiens (Human) protein is Protein FAM246C.